The primary structure comprises 712 residues: Polyribonucleotide nucleotidyltransferase (712 aa).

Mg(2+)-binding residues include D487 and D493. The 60-residue stretch at 554–613 folds into the KH domain; it reads PKIITMTINPDKIRDVIGPSGKQINKIIEETGVKIDIEQDGTVFISSINQEMNDKAKKII. One can recognise an S1 motif domain in the interval 623–691; sequence GEIYEGKVKR…KQGRVNLSRK (69 aa).

This sequence belongs to the polyribonucleotide nucleotidyltransferase family. It depends on Mg(2+) as a cofactor.

The protein resides in the cytoplasm. It carries out the reaction RNA(n+1) + phosphate = RNA(n) + a ribonucleoside 5'-diphosphate. In terms of biological role, involved in mRNA degradation. Catalyzes the phosphorolysis of single-stranded polyribonucleotides processively in the 3'- to 5'-direction. This Bacillus cereus (strain 03BB102) protein is Polyribonucleotide nucleotidyltransferase.